Here is a 665-residue protein sequence, read N- to C-terminus: F-box/WD repeat-containing protein lin-23 (665 aa).

Residues 81–127 (RDFISNLPAHLVELILFNVNSDSLKSCEEVSTSWRCALARGQHWKKL) form the F-box domain. 7 WD repeats span residues 220–257 (ENSK…CSRI), 260–299 (GHTG…KTLI), 301–337 (HCEA…DITI), 343–380 (GHRA…FVRT), 383–420 (GHRR…CLRV), 423–460 (GHEE…DPRA), and 472–509 (QHTG…PSGL). Positions 574–665 (AAAEAARGAG…VDEEMPDGGP (92 aa)) are disordered. Acidic residues-rich tracts occupy residues 584–595 (DNDESSSEEDLD) and 655–665 (DVDEEMPDGGP).

Part of a SCF (SKP1-cullin-F-box) protein ligase complex.

The protein resides in the cytoplasm. Functions cell autonomously to negatively regulate cell cycle progression. Required to restrain cell proliferation in response to developmental cues. Probably recognizes and binds to some proteins and promotes their ubiquitination and degradation. The polypeptide is F-box/WD repeat-containing protein lin-23 (lin-23) (Caenorhabditis elegans).